Here is a 381-residue protein sequence, read N- to C-terminus: ATP-dependent (S)-NAD(P)H-hydrate dehydratase (381 aa).

The 293-residue stretch at 84 to 376 (AEAVVRRITP…EFLGKSLEDI (293 aa)) folds into the YjeF C-terminal domain. (6S)-NADPHX is bound by residues glycine 197 and 250 to 256 (NVYEYKR). ATP-binding positions include 290-294 (KGKAD) and 309-318 (GSPRRCGGQG). Position 319 (aspartate 319) interacts with (6S)-NADPHX.

It belongs to the NnrD/CARKD family. Mg(2+) is required as a cofactor.

It carries out the reaction (6S)-NADHX + ATP = ADP + phosphate + NADH + H(+). The catalysed reaction is (6S)-NADPHX + ATP = ADP + phosphate + NADPH + H(+). Its function is as follows. Catalyzes the dehydration of the S-form of NAD(P)HX at the expense of ATP, which is converted to ADP. Together with NAD(P)HX epimerase, which catalyzes the epimerization of the S- and R-forms, the enzyme allows the repair of both epimers of NAD(P)HX, a damaged form of NAD(P)H that is a result of enzymatic or heat-dependent hydration. This is ATP-dependent (S)-NAD(P)H-hydrate dehydratase from Sorghum bicolor (Sorghum).